The sequence spans 413 residues: Ras association domain-containing protein 5 (413 aa).

Residues 1–105 are disordered; that stretch reads MASPAIGQRP…RDVRSIFEQP (105 aa). Residues 61 to 74 are compositionally biased toward basic and acidic residues; the sequence is ARGDPEPTPRDCRH. The Phorbol-ester/DAG-type zinc-finger motif lies at 117 to 165; that stretch reads GHRFAELALRGGPGWCDLCGREVLRQALRCANCKFTCHPECRSLIQLDC. Phosphoserine occurs at positions 177 and 274. The Ras-associating domain maps to 265–359; the sequence is PAATTDKRTS…LSFVLKENET (95 aa). Threonine 347 carries the post-translational modification Phosphothreonine. An SARAH domain is found at 361 to 408; sequence DVEWDAFSIPELQNFLTILEKEEQDKIHQLQKKYNKFRQKLEEALRES.

Interacts directly with activated HRAS; a RASSF5-STK4/MST1 complex probably associates with activated HRAS. Interacts with KRAS. Probably interacts with Ras-like GTPases RRAS, MRAS, RAP1B, RAP2A and RALA. Interacts with RRAS2. Can self-associate. Interacts with RSSF1 isoform A. The RSSF1 isoform A-RSSF5 heterodimer probably mediates the association of RSSF1 with HRAS. Isoform 2 interacts with activated RAP1A and ITGAL/LFA-1. Binds STK4/MST1, inhibiting STK4/MST1 autoactivation.

Its subcellular location is the cytoplasm. The protein resides in the cytoskeleton. Functionally, potential tumor suppressor. Seems to be involved in lymphocyte adhesion by linking RAP1A activation upon T-cell receptor or chemokine stimulation to integrin activation. Stimulates lymphocyte polarization and the patch-like distribution of ITGAL/LFA-1, resulting in an enhanced adhesion to ICAM1. Together with RAP1A may participate in regulation of microtubule growth. The association with activated RAP1A is required for directional movement of endothelial cells during wound healing. May be involved in regulation of Ras apoptotic function. The RASSF5-STK4/MST1 complex may mediate HRAS and KRAS induced apoptosis. The sequence is that of Ras association domain-containing protein 5 (Rassf5) from Rattus norvegicus (Rat).